A 466-amino-acid polypeptide reads, in one-letter code: Glutamate--tRNA ligase 1 (466 aa).

The short motif at 10-20 (PSPTGLIHLGN) is the 'HIGH' region element. 4 residues coordinate Zn(2+): cysteine 103, cysteine 105, cysteine 130, and histidine 132. A 'KMSKS' region motif is present at residues 247-251 (PLSKR). Lysine 250 serves as a coordination point for ATP.

This sequence belongs to the class-I aminoacyl-tRNA synthetase family. Glutamate--tRNA ligase type 1 subfamily. Monomer. The cofactor is Zn(2+).

The protein resides in the cytoplasm. The catalysed reaction is tRNA(Glu) + L-glutamate + ATP = L-glutamyl-tRNA(Glu) + AMP + diphosphate. Its function is as follows. Catalyzes the attachment of glutamate to tRNA(Glu) in a two-step reaction: glutamate is first activated by ATP to form Glu-AMP and then transferred to the acceptor end of tRNA(Glu). This is Glutamate--tRNA ligase 1 from Methylococcus capsulatus (strain ATCC 33009 / NCIMB 11132 / Bath).